The primary structure comprises 354 residues: MAELKNDRYLRALLKQPVDRTPVWMMRQAGRYLPEYKATRAEAGDFMSLCKNQDLACEVTLQPLRRYDLDAAILFSDILTVPDAMGLGLYFETGEGPRFERPTDTIDSIKKLCIPDPEDELGYVMRAVSTIRRELKGEVPLIGFSGSPWTLATYMVEGGSSKAFEKIKKMAYEEPATLHMLLDKLADSVTLYLNAQVANGAQSLMIFDSWGGALSHHAYREFSLRYMQKIVDGLTRHADGRQVPVTLFTKGGGLWLESMAETGCDALGLDWTVDIGDARRRVGHKVALQGNMDPSVLYGTPERIHQEVDQILSSYGEGTGHVFNLGHGIHQHVDPERAGSFINSVHELSAKYHK.

Substrate-binding positions include 27-31, aspartate 77, tyrosine 154, serine 209, and histidine 327; that span reads RQAGR.

The protein belongs to the uroporphyrinogen decarboxylase family. In terms of assembly, homodimer.

It is found in the cytoplasm. It carries out the reaction uroporphyrinogen III + 4 H(+) = coproporphyrinogen III + 4 CO2. The protein operates within porphyrin-containing compound metabolism; protoporphyrin-IX biosynthesis; coproporphyrinogen-III from 5-aminolevulinate: step 4/4. Functionally, catalyzes the decarboxylation of four acetate groups of uroporphyrinogen-III to yield coproporphyrinogen-III. The chain is Uroporphyrinogen decarboxylase from Shewanella halifaxensis (strain HAW-EB4).